We begin with the raw amino-acid sequence, 170 residues long: Small ribosomal subunit protein bS16 (170 aa).

The disordered stretch occupies residues Glu114 to Ser170. Residues Pro142–Ser170 are compositionally biased toward low complexity.

It belongs to the bacterial ribosomal protein bS16 family.

The chain is Small ribosomal subunit protein bS16 from Mycobacterium avium (strain 104).